Here is a 757-residue protein sequence, read N- to C-terminus: RNA cytosine C(5)-methyltransferase NSUN2 (757 aa).

The segment at 1 to 35 is disordered; sequence MGRRARGRRFQQPPQPEGEEDASDGGRKRGQAGWE. At S23 the chain carries Phosphoserine. K46 is covalently cross-linked (Glycyl lysine isopeptide (Lys-Gly) (interchain with G-Cter in SUMO2)). Position 139 is a phosphoserine; by AURKB (S139). S-adenosyl-L-methionine-binding positions include 184-190, D215, D242, and D268; that span reads CAAPGSK. The active-site Nucleophile is the C321. The interval 436–504 is disordered; that stretch reads NKRQPKVQNK…EKKDGVCGPP (69 aa). Residues S456 and S473 each carry the phosphoserine modification. Residues 463–476 show a composition bias toward polar residues; the sequence is GNPSDQSELESQMI. Residues K510 and K515 each participate in a glycyl lysine isopeptide (Lys-Gly) (interchain with G-Cter in SUMO2) cross-link. K585 carries the N6-acetyllysine; alternate modification. Residue K585 is modified to N6-malonyllysine; alternate. K585 is covalently cross-linked (Glycyl lysine isopeptide (Lys-Gly) (interchain with G-Cter in SUMO2); alternate). S592 is subject to Phosphoserine. Glycyl lysine isopeptide (Lys-Gly) (interchain with G-Cter in SUMO2) cross-links involve residues K639, K653, and K659. Residues 716–757 form a disordered region; it reads LTNENAASPEQPGDEDAKQTAQDPCVPDSVPGCDAAAAEPSR. T717 carries the phosphothreonine modification. Residue S723 is modified to Phosphoserine.

Belongs to the class I-like SAM-binding methyltransferase superfamily. RsmB/NOP family. TRM4 subfamily. In terms of assembly, interacts with NPM1 and NCL during interphase; interaction is disrupted following phosphorylation at Ser-139. In terms of processing, phosphorylated at Ser-139 by AURKB during mitosis, leading to abolish methyltransferase activity and the interaction with NPM1. Ubiquitously expressed at low level. Up-regulated in tumors. Dynamically expressed during morphogenesis and in adult skin: in adult skin, expression is up-regulated in the bulge and hair germ as soon as the hair follicle enters its growing phase (anagen). During anagen, expressed at highest level in cells of the hair germ that give rise to the hair matrix.

The protein localises to the nucleus. Its subcellular location is the nucleolus. The protein resides in the cytoplasm. It is found in the mitochondrion. It localises to the cytoskeleton. The protein localises to the spindle. Its subcellular location is the secreted. The protein resides in the extracellular exosome. The catalysed reaction is cytidine(48) in tRNA + S-adenosyl-L-methionine = 5-methylcytidine(48) in tRNA + S-adenosyl-L-homocysteine + H(+). The enzyme catalyses cytidine(49) in tRNA + S-adenosyl-L-methionine = 5-methylcytidine(49) in tRNA + S-adenosyl-L-homocysteine + H(+). It carries out the reaction cytidine(50) in tRNA + S-adenosyl-L-methionine = 5-methylcytidine(50) in tRNA + S-adenosyl-L-homocysteine + H(+). It catalyses the reaction cytidine(34) in tRNA precursor + S-adenosyl-L-methionine = 5-methylcytidine(34) in tRNA precursor + S-adenosyl-L-homocysteine + H(+). The catalysed reaction is a cytidine in mRNA + S-adenosyl-L-methionine = a 5-methylcytidine in mRNA + S-adenosyl-L-homocysteine + H(+). With respect to regulation, inhibited by magnesium ions. Its function is as follows. RNA cytosine C(5)-methyltransferase that methylates cytosine to 5-methylcytosine (m5C) in various RNAs, such as tRNAs, mRNAs and some long non-coding RNAs (lncRNAs). Involved in various processes, such as epidermal stem cell differentiation, testis differentiation and maternal to zygotic transition during early development: acts by increasing protein synthesis; cytosine C(5)-methylation promoting tRNA stability and preventing mRNA decay. Methylates cytosine to 5-methylcytosine (m5C) at positions 34 and 48 of intron-containing tRNA(Leu)(CAA) precursors, and at positions 48, 49 and 50 of tRNA(Gly)(GCC) precursors. tRNA methylation is required generation of RNA fragments derived from tRNAs (tRFs). Also mediates C(5)-methylation of mitochondrial tRNAs. Catalyzes cytosine C(5)-methylation of mRNAs, leading to stabilize them and prevent mRNA decay: mRNA stabilization involves YBX1 that specifically recognizes and binds m5C-modified transcripts. Cytosine C(5)-methylation of mRNAs also regulates mRNA export: methylated transcripts are specifically recognized by THOC4/ALYREF, which mediates mRNA nucleo-cytoplasmic shuttling. Also mediates cytosine C(5)-methylation of non-coding RNAs, such as vault RNAs (vtRNAs), promoting their processing into regulatory small RNAs. Cytosine C(5)-methylation of vtRNA VTRNA1.1 promotes its processing into small-vault RNA4 (svRNA4) and regulates epidermal differentiation. May act downstream of Myc to regulate epidermal cell growth and proliferation. Required for proper spindle assembly and chromosome segregation, independently of its methyltransferase activity. The chain is RNA cytosine C(5)-methyltransferase NSUN2 from Mus musculus (Mouse).